The chain runs to 240 residues: Flagellar L-ring protein (240 aa).

Residues 1–20 (MIRNFLLFFMPIYAILFLSG) form the signal peptide. Cysteine 21 carries N-palmitoyl cysteine lipidation. A lipid anchor (S-diacylglycerol cysteine) is attached at cysteine 21.

This sequence belongs to the FlgH family. The basal body constitutes a major portion of the flagellar organelle and consists of four rings (L,P,S, and M) mounted on a central rod.

Its subcellular location is the cell outer membrane. It localises to the bacterial flagellum basal body. Functionally, assembles around the rod to form the L-ring and probably protects the motor/basal body from shearing forces during rotation. In Sulfurimonas denitrificans (strain ATCC 33889 / DSM 1251) (Thiomicrospira denitrificans (strain ATCC 33889 / DSM 1251)), this protein is Flagellar L-ring protein.